A 250-amino-acid polypeptide reads, in one-letter code: MDPIGINKVLDHLAPSELIKPVKSCHNKPSVLVLDDRIVDAATKDLYVNGFQEEIQYQNPTPENLQHMFHQGIEILDSARMINVTHLALWKPSSFKLGNPVDFALDDNYDTFWQSDGGQPHQLDIMFSKRMDICVMAIFFSMIADESYAPSLVKVYAGHSPSDARFYKMLEVRNVNGWVALRFLDNREDDQLLKCQFIRLLFPVNHENGKDTHLRGIRLYVPSNEPHQDTHEWAQTLPETNNVFQDAILR.

A DOC domain is found at 60 to 246; the sequence is PTPENLQHMF…LPETNNVFQD (187 aa).

This sequence belongs to the APC10 family. The APC/C is composed of at least 13 subunits that stay tightly associated throughout the cell cycle: APC1, APC2, APC4, APC5, APC9, APC11, CDC16, CDC23, CDC26, CDC27, DOC1, MND2 and SWM1.

Its subcellular location is the cytoplasm. It localises to the nucleus. It participates in protein modification; protein ubiquitination. In terms of biological role, component of the anaphase promoting complex/cyclosome (APC/C), a cell cycle-regulated E3 ubiquitin-protein ligase complex that controls progression through mitosis and the G1 phase of the cell cycle. The APC/C is thought to confer substrate specificity and, in the presence of ubiquitin-conjugating E2 enzymes, it catalyzes the formation of protein-ubiquitin conjugates that are subsequently degraded by the 26S proteasome. In early mitosis, the APC/C is activated by CDC20 and targets securin PDS1, the B-type cyclin CLB5, and other anaphase inhibitory proteins for proteolysis, thereby triggering the separation of sister chromatids at the metaphase-to-anaphase transition. In late mitosis and in G1, degradation of CLB5 allows activation of the APC/C by CDH1, which is needed to destroy CDC20 and the B-type cyclin CLB2 to allow exit from mitosis and creating the low CDK state necessary for cytokinesis and for reforming prereplicative complexes in G1 prior to another round of replication. DOC1 is required, together with the coactivators CDH1 and CDC20, for recognition and binding of the substrates. The protein is Anaphase-promoting complex subunit DOC1 (DOC1) of Saccharomyces cerevisiae (strain ATCC 204508 / S288c) (Baker's yeast).